A 162-amino-acid polypeptide reads, in one-letter code: Cyclic pyranopterin monophosphate synthase (162 aa).

Substrate contacts are provided by residues 75-77 (LCH) and 113-114 (ME). D128 is a catalytic residue.

This sequence belongs to the MoaC family. As to quaternary structure, homohexamer; trimer of dimers.

It catalyses the reaction (8S)-3',8-cyclo-7,8-dihydroguanosine 5'-triphosphate = cyclic pyranopterin phosphate + diphosphate. It functions in the pathway cofactor biosynthesis; molybdopterin biosynthesis. In terms of biological role, catalyzes the conversion of (8S)-3',8-cyclo-7,8-dihydroguanosine 5'-triphosphate to cyclic pyranopterin monophosphate (cPMP). This chain is Cyclic pyranopterin monophosphate synthase, found in Klebsiella pneumoniae subsp. pneumoniae (strain ATCC 700721 / MGH 78578).